Consider the following 349-residue polypeptide: tRNA pseudouridine synthase D (349 aa).

A substrate-binding site is contributed by phenylalanine 27. The active-site Nucleophile is aspartate 80. Asparagine 129 contributes to the substrate binding site. In terms of domain architecture, TRUD spans 155–303 (GVPNYFGAQR…VEAARRAMLL (149 aa)). Residue phenylalanine 329 participates in substrate binding.

It belongs to the pseudouridine synthase TruD family.

It carries out the reaction uridine(13) in tRNA = pseudouridine(13) in tRNA. Responsible for synthesis of pseudouridine from uracil-13 in transfer RNAs. This is tRNA pseudouridine synthase D from Shigella sonnei (strain Ss046).